A 225-amino-acid polypeptide reads, in one-letter code: Probable polyketide biosynthesis zinc-dependent hydrolase PksB (225 aa).

Positions 62, 64, 66, 67, 123, 140, and 181 each coordinate Zn(2+).

This sequence belongs to the metallo-beta-lactamase superfamily. Zn(2+) serves as cofactor.

The protein localises to the cytoplasm. It functions in the pathway antibiotic biosynthesis; bacillaene biosynthesis. In terms of biological role, probably involved in some intermediate steps for the synthesis of the antibiotic polyketide bacillaene which is involved in secondary metabolism. This is Probable polyketide biosynthesis zinc-dependent hydrolase PksB (pksB) from Bacillus subtilis (strain 168).